The following is a 250-amino-acid chain: Small ribosomal subunit protein uS3 (250 aa).

The KH type-2 domain occupies 39-111 (IRQLINNFSK…DINLNILEVK (73 aa)).

The protein belongs to the universal ribosomal protein uS3 family. In terms of assembly, part of the 30S ribosomal subunit. Forms a tight complex with proteins S10 and S14.

Its function is as follows. Binds the lower part of the 30S subunit head. Binds mRNA in the 70S ribosome, positioning it for translation. This chain is Small ribosomal subunit protein uS3, found in Phytoplasma australiense.